The following is a 148-amino-acid chain: MNIKRITTEADLHEALKIRRGVFIEEQHVSEADEFDEFDTLQEQCQHILVYHENQPVGTGRARIVGHTAKLERICILKPYRKYGLGKIIVSGLEEIMKEKGLTSYKLHGQTQAAGFYQKLGYQISSQEFMEDGIPHVLMTKEISRNIT.

Positions 1 to 144 (MNIKRITTEA…PHVLMTKEIS (144 aa)) constitute an N-acetyltransferase domain.

This is an uncharacterized protein from Bacillus subtilis (strain 168).